Consider the following 631-residue polypeptide: tRNA uridine 5-carboxymethylaminomethyl modification enzyme MnmG (631 aa).

Gly15 to Gly20 lines the FAD pocket. The interval Tyr214–Ser233 is disordered. Gly276–Phe290 is an NAD(+) binding site.

This sequence belongs to the MnmG family. Homodimer. Heterotetramer of two MnmE and two MnmG subunits. FAD is required as a cofactor.

The protein localises to the cytoplasm. Functionally, NAD-binding protein involved in the addition of a carboxymethylaminomethyl (cmnm) group at the wobble position (U34) of certain tRNAs, forming tRNA-cmnm(5)s(2)U34. This chain is tRNA uridine 5-carboxymethylaminomethyl modification enzyme MnmG, found in Lactobacillus delbrueckii subsp. bulgaricus (strain ATCC BAA-365 / Lb-18).